The primary structure comprises 418 residues: ADP-ribose glycohydrolase MACROD2 (418 aa).

One can recognise a Macro domain in the interval 57–238 (PEEIQVKNSL…IYKRKLNEFF (182 aa)). Residues 75–77 (GDI), 88–90 (AAN), 95–100 (GGGGVD), 183–189 (ISTGIYG), and Phe-222 contribute to the substrate site. Positions 238 to 418 (FPKDGGDDEE…KDTNDDANEA (181 aa)) are disordered. A compositionally biased stretch (basic and acidic residues) spans 250-262 (KGDSDEMKEDTEG). A compositionally biased stretch (polar residues) spans 295-318 (TGNTQDMTAMSLETNEGNDVSSPA). Basic and acidic residues predominate over residues 321–360 (PLKEGEELSEAKITGEKISVEPKTPEPEDAKMTVEEKSQE). Over residues 377 to 389 (ETEDLDGDSEEPS) the composition is skewed to acidic residues.

The protein belongs to the MacroD-type family. MacroD1/2-like subfamily.

It localises to the nucleus. It carries out the reaction 2''-O-acetyl-ADP-D-ribose + H2O = ADP-D-ribose + acetate + H(+). It catalyses the reaction 4-O-(ADP-D-ribosyl)-L-aspartyl-[protein] + H2O = L-aspartyl-[protein] + ADP-D-ribose + H(+). The catalysed reaction is 5-O-(ADP-D-ribosyl)-L-glutamyl-[protein] + H2O = L-glutamyl-[protein] + ADP-D-ribose + H(+). The enzyme catalyses alpha-NAD(+) + H2O = ADP-D-ribose + nicotinamide + H(+). Its activity is regulated as follows. Subject to product inhibition by ADP-ribose. Functionally, removes ADP-ribose from aspartate and glutamate residues in proteins bearing a single ADP-ribose moiety. Inactive towards proteins bearing poly-ADP-ribose. Deacetylates O-acetyl-ADP ribose, a signaling molecule generated by the deacetylation of acetylated lysine residues in histones and other proteins. In Xenopus laevis (African clawed frog), this protein is ADP-ribose glycohydrolase MACROD2.